We begin with the raw amino-acid sequence, 254 residues long: MSTQLDNITSAETAPDYLDEVPDDVEMSLFDHLDELRTRIFLSLGAVLVGVVACFIFVKPLVQWLQVPAGTVKFLQLSPGEFFFVSVKVAGYSGILVMSPFILYQIIQFVLPGLTRRERRLLGPVVLGSSVLFFAGLGFAYYALIPAALKFFVSYGADVVEQLWSIDKYFEFVLLLMFSTGLAFQIPIIQVVLGFLGIVSSEQMLKGWRFVILGAMVLGAILTPSTDPLTQSLLAGAVLGLYFGGIGCVRLLGK.

Transmembrane regions (helical) follow at residues 40 to 60, 82 to 104, 125 to 145, 172 to 192, 210 to 230, and 233 to 253; these read IFLSLGAVLVGVVACFIFVKP, FFFVSVKVAGYSGILVMSPFILY, VVLGSSVLFFAGLGFAYYALI, FVLLLMFSTGLAFQIPIIQVV, FVILGAMVLGAILTPSTDPLT, and LLAGAVLGLYFGGIGCVRLLG.

The protein belongs to the TatC family. As to quaternary structure, forms a complex with TatA.

The protein localises to the cell inner membrane. Part of the twin-arginine translocation (Tat) system that transports large folded proteins containing a characteristic twin-arginine motif in their signal peptide across membranes. The chain is Sec-independent protein translocase protein TatC from Synechocystis sp. (strain ATCC 27184 / PCC 6803 / Kazusa).